We begin with the raw amino-acid sequence, 450 residues long: 3-phosphoshikimate 1-carboxyvinyltransferase (450 aa).

Residues 1–26 form a disordered region; that stretch reads MSAHGDPIPMTAHPSGPLSGTAQVPG. Residues lysine 28, serine 29, and arginine 33 each contribute to the 3-phosphoshikimate site. Lysine 28 is a phosphoenolpyruvate binding site. Residues glycine 101 and arginine 129 each contribute to the phosphoenolpyruvate site. Residues serine 174, glutamine 176, aspartate 327, and lysine 354 each contribute to the 3-phosphoshikimate site. Phosphoenolpyruvate is bound at residue glutamine 176. Catalysis depends on aspartate 327, which acts as the Proton acceptor. Arginine 358 and arginine 403 together coordinate phosphoenolpyruvate.

The protein belongs to the EPSP synthase family. In terms of assembly, monomer.

The protein resides in the cytoplasm. It catalyses the reaction 3-phosphoshikimate + phosphoenolpyruvate = 5-O-(1-carboxyvinyl)-3-phosphoshikimate + phosphate. The protein operates within metabolic intermediate biosynthesis; chorismate biosynthesis; chorismate from D-erythrose 4-phosphate and phosphoenolpyruvate: step 6/7. Its function is as follows. Catalyzes the transfer of the enolpyruvyl moiety of phosphoenolpyruvate (PEP) to the 5-hydroxyl of shikimate-3-phosphate (S3P) to produce enolpyruvyl shikimate-3-phosphate and inorganic phosphate. The polypeptide is 3-phosphoshikimate 1-carboxyvinyltransferase (Dinoroseobacter shibae (strain DSM 16493 / NCIMB 14021 / DFL 12)).